An 89-amino-acid polypeptide reads, in one-letter code: uncharacterized protein (89 aa).

A run of 2 helical transmembrane segments spans residues 11 to 31 (IFGAVILVSMIGALVAEPIAL) and 63 to 83 (AAISAALGPAGLASGVFTVVF).

It localises to the cell membrane. This is an uncharacterized protein from Methanocaldococcus jannaschii (strain ATCC 43067 / DSM 2661 / JAL-1 / JCM 10045 / NBRC 100440) (Methanococcus jannaschii).